The chain runs to 616 residues: Chaperone protein HscA (616 aa).

It belongs to the heat shock protein 70 family.

Its function is as follows. Chaperone involved in the maturation of iron-sulfur cluster-containing proteins. Has a low intrinsic ATPase activity which is markedly stimulated by HscB. Involved in the maturation of IscU. In Salmonella enteritidis PT4 (strain P125109), this protein is Chaperone protein HscA.